A 208-amino-acid chain; its full sequence is High frequency lysogenization protein HflD homolog (208 aa).

It belongs to the HflD family.

It is found in the cytoplasm. The protein resides in the cell inner membrane. The sequence is that of High frequency lysogenization protein HflD homolog from Pseudomonas putida (strain ATCC 700007 / DSM 6899 / JCM 31910 / BCRC 17059 / LMG 24140 / F1).